A 1057-amino-acid polypeptide reads, in one-letter code: Collagen alpha-1(I) chain (1057 aa).

Glutamine 1 is modified (pyrrolidone carboxylic acid). Residues 1-10 show a composition bias toward basic and acidic residues; the sequence is QLSYGYDEKS. The nonhelical region (N-terminal) stretch occupies residues 1 to 17; that stretch reads QLSYGYDEKSAGGISVP. Residues 1 to 1057 are disordered; it reads QLSYGYDEKS…AHDGGRYYRA (1057 aa). Position 9 is an allysine (lysine 9). Serine 10 is subject to Phosphoserine. Collagen-like domains are found at residues 18–76, 75–134, 135–193, and 195–252; these read GPMG…EAGK, GKPG…PGEN, GAPG…AKGE, and GPQG…GFPG. The tract at residues 18-1031 is triple-helical region; it reads GPMGPSGPRG…PGPPGPPGPP (1014 aa). 11 positions are modified to 4-hydroxyproline: proline 29, proline 32, proline 35, proline 44, proline 47, proline 50, proline 65, proline 80, proline 86, proline 95, and proline 101. The span at 37 to 56 shows a compositional bias: low complexity; that stretch reads PQGFQGPPGEPGEPGASGPM. Over residues 68–82 the composition is skewed to basic and acidic residues; sequence NGDDGEAGKPGRPGE. Lysine 104 is modified (5-hydroxylysine; alternate). A glycan (O-linked (Gal...) hydroxylysine; alternate) is linked at lysine 104. Serine 110 is modified (phosphoserine). Over residues 118–134 the composition is skewed to low complexity; the sequence is DAGPAGPKGEPGSPGEN. 4-hydroxyproline occurs at positions 128, 131, 137, 146, and 152. The span at 157–170 shows a compositional bias: low complexity; the sequence is PAGARGNDGATGAA. A compositionally biased stretch (pro residues) spans 172-184; sequence PPGPTGPAGPPGF. 4-hydroxyproline is present on residues proline 173, proline 182, proline 185, proline 212, proline 215, proline 227, proline 233, proline 242, proline 248, proline 251, and proline 266. The span at 218 to 269 shows a compositional bias: low complexity; the sequence is AGAAGPAGNPGADGQPGAKGANGAPGIAGAPGFPGARGPAGPQGPSGAPGPK. The residue at position 269 (lysine 269) is a 5-hydroxylysine. 4-hydroxyproline occurs at positions 275, 278, 290, 292, 299, 314, 320, 323, 329, and 335. Residues 287–296 are compositionally biased toward low complexity; the sequence is KGEPGPIGIQ. The segment covering 324–333 has biased composition (gly residues); the sequence is GERGGPGSRG. Lysine 344 carries the 5-hydroxylysine modification. 4-hydroxyproline occurs at positions 353, 362, 368, 374, 383, 386, 395, 404, 410, 422, 431, 440, 443, 461, 479, 485, 491, 497, 503, 509, 521, 530, 542, 554, 557, 563, 569, and 578. The span at 377-403 shows a compositional bias: low complexity; that stretch reads KGLTGSPGSPGPDGKTGPPGPAGQDGR. The span at 412–431 shows a compositional bias: low complexity; sequence ARGQAGVMGFPGPKGAAGEP. Positions 473–500 are enriched in low complexity; that stretch reads QGPAGSPGFQGLPGPAGPPGEAGKPGEQ. 2 consecutive Collagen-like domains span residues 522 to 579 and 555 to 613; these read GERG…GLPG and GAPG…PPGP. Low complexity predominate over residues 539-566; that stretch reads NGAPGNDGAKGDAGAPGAPGSQGAPGLQ. Lysine 590 is modified (5-hydroxylysine). 4-hydroxyproline occurs at positions 596, 611, and 617. 2 Collagen-like domains span residues 618-676 and 678-736; these read GDKG…AKGD and GPPG…PPGP. Over residues 623 to 637 the composition is skewed to low complexity; it reads AGPSGPAGPTGARGA. Serine 626 is modified (phosphoserine). Residues proline 638, proline 644, proline 647, proline 656, proline 662, proline 680, proline 689, and proline 698 each carry the 4-hydroxyproline modification. Residues 650-677 are compositionally biased toward low complexity; the sequence is AGFAGPPGADGQPGAKGEPGDAGAKGDA. 5-hydroxylysine is present on lysine 701. Residues 706-722 are compositionally biased toward low complexity; that stretch reads SAGPPGATGFPGAAGRV. 2 positions are modified to 4-hydroxyproline: proline 710 and proline 716. Proline 724 bears the 3-hydroxyproline mark. A 4-hydroxyproline mark is found at proline 725, proline 734, proline 737, proline 758, proline 764, proline 767, proline 776, and proline 785. Residues 751-760 show a composition bias toward low complexity; that stretch reads ETGPAGRPGE. Residues 770-785 are compositionally biased toward low complexity; the sequence is AGEKGSPGADGPAGAP. Gly residues predominate over residues 789 to 798; that stretch reads GPQGIGGQRG. Proline 803, proline 812, proline 815, proline 821, proline 836, proline 842, proline 848, proline 857, proline 863, and proline 869 each carry 4-hydroxyproline. The Collagen-like 9 domain occupies 804 to 861; the sequence is GQRGERGFPGLPGPSGEPGKQGPSGSSGERGPPGPAGPPGLAGPPGESGREGAPGAEG. Residues 835–845 are compositionally biased toward pro residues; the sequence is PPGPAGPPGLA. Lysine 872 is modified (5-hydroxylysine). Positions 881–896 are enriched in pro residues; it reads SGPPGAPGAPGAPGPV. Proline 884, proline 887, and proline 890 each carry 4-hydroxyproline. Residues 917–931 are compositionally biased toward low complexity; the sequence is AGPAGVRGPAGPQGP. Collagen-like domains lie at 918-976 and 972-1030; these read GPAG…ASGP and GASG…PPGP. The span at 932–946 shows a compositional bias: basic and acidic residues; it reads RGDKGETGEQGDRGL. Lysine 935 carries the 5-hydroxylysine modification. Position 947 is a 5-hydroxylysine; alternate (lysine 947). O-linked (Gal...) hydroxylysine; alternate glycosylation occurs at lysine 947. 4-hydroxyproline is present on residues proline 959, proline 962, proline 965, proline 983, proline 998, and proline 1001. Low complexity predominate over residues 965-997; that stretch reads PGEQGPSGASGPAGPRGPPGSAGAPGKDGLNGL. The residue at position 1003 (proline 1003) is a 3-hydroxyproline. Proline 1004 carries the 4-hydroxyproline modification. Over residues 1016-1031 the composition is skewed to pro residues; sequence VGPPGPPGPPGPPGPP. The residue at position 1018 (proline 1018) is a 3-hydroxyproline. Proline 1019 is modified (4-hydroxyproline). Residue proline 1021 is modified to 3-hydroxyproline. Proline 1022 carries the post-translational modification 4-hydroxyproline. At proline 1024 the chain carries 3-hydroxyproline. Proline 1025, proline 1028, and proline 1031 each carry 4-hydroxyproline. A nonhelical region (C-terminal) region spans residues 1032–1055; it reads SGAFDFSFLPQPPQEKAHDGGRYY. Residues 1046–1057 are compositionally biased toward basic and acidic residues; it reads EKAHDGGRYYRA. Lysine 1047 carries the allysine modification.

It belongs to the fibrillar collagen family. Trimers of one alpha 2(I) and two alpha 1(I) chains. Contains mostly 4-hydroxyproline. Proline residues at the third position of the tripeptide repeating unit (G-X-Y) are hydroxylated in some or all of the chains. In terms of processing, contains 3-hydroxyproline at a few sites. This modification occurs on the first proline residue in the sequence motif Gly-Pro-Hyp, where Hyp is 4-hydroxyproline. Post-translationally, lysine residues at the third position of the tripeptide repeating unit (G-X-Y) are 5-hydroxylated in some or all of the chains. O-glycosylated on hydroxylated lysine residues. The O-linked glycan consists of a Glc-Gal disaccharide.

Its subcellular location is the secreted. It localises to the extracellular space. It is found in the extracellular matrix. Functionally, type I collagen is a member of group I collagen (fibrillar forming collagen). The protein is Collagen alpha-1(I) chain (COL1A1) of Mammut americanum (American mastodon).